A 366-amino-acid chain; its full sequence is Homer protein homolog 1 (366 aa).

The WH1 domain occupies 1 to 110 (MGEQPIFSTR…EKFQEFKEAA (110 aa)). Position 2 is an N-acetylglycine (Gly2). A disordered region spans residues 114–189 (KEKSQEKMEL…RTQGLSHASS (76 aa)). Positions 138–147 (SPLTPESING) are enriched in polar residues. A coiled-coil region spans residues 193–364 (KHWEAELATL…LRDNLAKLLE (172 aa)). Positions 302-366 (KLQEVEIRNK…DNLAKLLECS (65 aa)) are required for tetramerization. At Ser318 the chain carries Phosphoserine.

The protein belongs to the Homer family. In terms of assembly, tetramer; this tetrameric structure is critical for forming the high-order complex with SHANK1, which in turn is necessary for the structural and functional integrity of dendritic spines. Interacts with GRM1, GRM5, ITPR1, DYN3, RYR1, RYR2 and SHANK3. Interacts with IFT57 and OPHN1. Isoform 1 and isoform 2 encode coiled-coil structures that mediate homo- and heteromultimerization. Interacts with SHANK1; forms high-order polymerized complex with a mesh-like network structure, at least composed of SHANK1, HOMER1 and DLGAP1; the complex formation is SHANK1 multimerization dependent. Interacts with NFATC4. Interacts with DAGLA (via PPXXF motif); this interaction is required for the cell membrane localization of DAGLA. Interacts with SRGAP2. In terms of tissue distribution, highly expressed in cortex, Purkinje cells of the cerebellum, hippocampus, striatum and olfactory bulb. Isoform 1 and isoform 3 are expressed in skeletal and cardiac muscle.

The protein resides in the cytoplasm. It is found in the postsynaptic density. It localises to the synapse. Its subcellular location is the cell projection. The protein localises to the dendritic spine. Postsynaptic density scaffolding protein. Binds and cross-links cytoplasmic regions of GRM1, GRM5, ITPR1, DNM3, RYR1, RYR2, SHANK1 and SHANK3. By physically linking GRM1 and GRM5 with ER-associated ITPR1 receptors, it aids the coupling of surface receptors to intracellular calcium release. May also couple GRM1 to PI3 kinase through its interaction with AGAP2. Differentially regulates the functions of the calcium activated channel ryanodine receptors RYR1 and RYR2. Isoform 1 decreases the activity of RYR2, and increases the activity of RYR1, whereas isoform 3 counteracts the effects by competing for binding sites. Isoform 1 regulates the trafficking and surface expression of GRM5. Isoform 3 acts as a natural dominant negative, in dynamic competition with constitutively expressed isoform 1, and isoform 2 to regulate synaptic metabotropic glutamate function. Isoform 3, may be involved in the structural changes that occur at synapses during long-lasting neuronal plasticity and development. Forms a high-order complex with SHANK1, which in turn is necessary for the structural and functional integrity of dendritic spines. Negatively regulates T cell activation by inhibiting the calcineurin-NFAT pathway. Acts by competing with calcineurin/PPP3CA for NFAT protein binding, hence preventing NFAT activation by PPP3CA. This is Homer protein homolog 1 from Rattus norvegicus (Rat).